The primary structure comprises 205 residues: Holliday junction branch migration complex subunit RuvA (205 aa).

Positions 1–62 are domain I; sequence MFEYVTGYVE…EDIMALYGFK (62 aa). The interval 63–141 is domain II; it reads TREERLLFTK…DVVPDAFVDL (79 aa). Residues 142 to 152 form a flexible linker region; it reads FSDTESFDTKK. The segment at 153 to 205 is domain III; the sequence is GSSVELDEALEALRALGYAEREVSRVVPELLKESLTTDQYIKKALSLLLNGKR.

This sequence belongs to the RuvA family. As to quaternary structure, homotetramer. Forms an RuvA(8)-RuvB(12)-Holliday junction (HJ) complex. HJ DNA is sandwiched between 2 RuvA tetramers; dsDNA enters through RuvA and exits via RuvB. An RuvB hexamer assembles on each DNA strand where it exits the tetramer. Each RuvB hexamer is contacted by two RuvA subunits (via domain III) on 2 adjacent RuvB subunits; this complex drives branch migration. In the full resolvosome a probable DNA-RuvA(4)-RuvB(12)-RuvC(2) complex forms which resolves the HJ.

The protein localises to the cytoplasm. Its function is as follows. The RuvA-RuvB-RuvC complex processes Holliday junction (HJ) DNA during genetic recombination and DNA repair, while the RuvA-RuvB complex plays an important role in the rescue of blocked DNA replication forks via replication fork reversal (RFR). RuvA specifically binds to HJ cruciform DNA, conferring on it an open structure. The RuvB hexamer acts as an ATP-dependent pump, pulling dsDNA into and through the RuvAB complex. HJ branch migration allows RuvC to scan DNA until it finds its consensus sequence, where it cleaves and resolves the cruciform DNA. The polypeptide is Holliday junction branch migration complex subunit RuvA (Bacillus mycoides (strain KBAB4) (Bacillus weihenstephanensis)).